The chain runs to 352 residues: Phosphoribosylformylglycinamidine cyclo-ligase (352 aa).

Belongs to the AIR synthase family.

Its subcellular location is the cytoplasm. The enzyme catalyses 2-formamido-N(1)-(5-O-phospho-beta-D-ribosyl)acetamidine + ATP = 5-amino-1-(5-phospho-beta-D-ribosyl)imidazole + ADP + phosphate + H(+). It functions in the pathway purine metabolism; IMP biosynthesis via de novo pathway; 5-amino-1-(5-phospho-D-ribosyl)imidazole from N(2)-formyl-N(1)-(5-phospho-D-ribosyl)glycinamide: step 2/2. This is Phosphoribosylformylglycinamidine cyclo-ligase from Pseudomonas savastanoi pv. phaseolicola (strain 1448A / Race 6) (Pseudomonas syringae pv. phaseolicola (strain 1448A / Race 6)).